We begin with the raw amino-acid sequence, 151 residues long: Leukocyte cell-derived chemotaxin-2 (151 aa).

The signal sequence occupies residues methionine 1 to alanine 18. 3 disulfides stabilise this stretch: cysteine 25–cysteine 60, cysteine 36–cysteine 41, and cysteine 99–cysteine 142. Residues histidine 53, aspartate 57, and histidine 138 each contribute to the Zn(2+) site.

This sequence belongs to the LECT2/MIM-1 family. As to quaternary structure, interacts with MET. As to expression, highly expressed in adult and fetal liver and weakly in testis. Not expressed in bone marrow.

It localises to the cytoplasm. Its subcellular location is the secreted. Functionally, has a neutrophil chemotactic activity. Also a positive regulator of chondrocyte proliferation. Does not show metalloendopeptidase activity. The polypeptide is Leukocyte cell-derived chemotaxin-2 (LECT2) (Homo sapiens (Human)).